The primary structure comprises 219 residues: Elongation factor Ts, chloroplastic (219 aa).

Belongs to the EF-Ts family.

It localises to the plastid. The protein localises to the chloroplast. Associates with the EF-Tu.GDP complex and induces the exchange of GDP to GTP. It remains bound to the aminoacyl-tRNA.EF-Tu.GTP complex up to the GTP hydrolysis stage on the ribosome. The sequence is that of Elongation factor Ts, chloroplastic (tsf) from Rhodomonas salina (Cryptomonas salina).